A 128-amino-acid polypeptide reads, in one-letter code: MTESPQKRHLGQGIERQNEQYACQGALSTIGMRIRQSVDRGYQVSGAAPAPAARTAASCVQDNSELTIPDYKRVPMPSSKQAPMLVNSRTVSSSSSLEMWENQLDERLEHIDNDIMRNKRAFEQVEDW.

The interval 70–97 (DYKRVPMPSSKQAPMLVNSRTVSSSSSL) is disordered.

The protein belongs to the DIF1/spd1 family.

Its subcellular location is the cytoplasm. The protein localises to the nucleus. Mediates the nuclear localization of the ribonucleotide reductase. This chain is Damage-regulated import facilitator 1 (DIF1), found in Lachancea thermotolerans (strain ATCC 56472 / CBS 6340 / NRRL Y-8284) (Yeast).